The primary structure comprises 192 residues: Lipid A acyltransferase PagP (192 aa).

An N-terminal signal peptide occupies residues 1–26 (MTVVNKSFLTFLVFFCQILFPLNASA). Catalysis depends on residues His-64, Asp-107, and Ser-108.

The protein belongs to the lipid A palmitoyltransferase family. In terms of assembly, homodimer.

The protein localises to the cell outer membrane. The catalysed reaction is a lipid A + a 1,2-diacyl-sn-glycero-3-phosphocholine = a hepta-acyl lipid A + a 2-acyl-sn-glycero-3-phosphocholine. It carries out the reaction a lipid IVA + a 1,2-diacyl-sn-glycero-3-phosphocholine = a lipid IVB + a 2-acyl-sn-glycero-3-phosphocholine. It catalyses the reaction a lipid IIA + a 1,2-diacyl-sn-glycero-3-phosphocholine = a lipid IIB + a 2-acyl-sn-glycero-3-phosphocholine. Its function is as follows. Transfers a fatty acid residue from the sn-1 position of a phospholipid to the N-linked hydroxyfatty acid chain on the proximal unit of lipid A or its precursors. The chain is Lipid A acyltransferase PagP from Cronobacter turicensis (strain DSM 18703 / CCUG 55852 / LMG 23827 / z3032).